We begin with the raw amino-acid sequence, 39 residues long: Cytochrome b559 subunit beta (39 aa).

The helical transmembrane segment at 14-30 threads the bilayer; the sequence is WLAVHGLAVPTVFFLGS. His18 lines the heme pocket.

The protein belongs to the PsbE/PsbF family. Heterodimer of an alpha subunit and a beta subunit. PSII is composed of 1 copy each of membrane proteins PsbA, PsbB, PsbC, PsbD, PsbE, PsbF, PsbH, PsbI, PsbJ, PsbK, PsbL, PsbM, PsbT, PsbX, PsbY, PsbZ, Psb30/Ycf12, at least 3 peripheral proteins of the oxygen-evolving complex and a large number of cofactors. It forms dimeric complexes. The cofactor is heme b.

It is found in the plastid. The protein localises to the chloroplast thylakoid membrane. Functionally, this b-type cytochrome is tightly associated with the reaction center of photosystem II (PSII). PSII is a light-driven water:plastoquinone oxidoreductase that uses light energy to abstract electrons from H(2)O, generating O(2) and a proton gradient subsequently used for ATP formation. It consists of a core antenna complex that captures photons, and an electron transfer chain that converts photonic excitation into a charge separation. The chain is Cytochrome b559 subunit beta from Gnetum gnemon (Spanish joint-fir).